The primary structure comprises 97 residues: HssA/B-like protein 27 (97 aa).

Belongs to the hssA/B family.

This Dictyostelium discoideum (Social amoeba) protein is HssA/B-like protein 27 (hssl27).